A 439-amino-acid chain; its full sequence is UPF0597 protein Dalk_4447 (439 aa).

The protein belongs to the UPF0597 family.

This chain is UPF0597 protein Dalk_4447, found in Desulfatibacillum aliphaticivorans.